The following is a 320-amino-acid chain: Cytochrome f (320 aa).

Residues 1-35 form the signal peptide; sequence MENRNTFSWVKEQITRSISVSIMIYVITRTSISNA. Heme is bound by residues Tyr-36, Cys-56, Cys-59, and His-60. Residues 286 to 305 form a helical membrane-spanning segment; it reads VQGLLFFFASVILAQVFLVL.

Belongs to the cytochrome f family. As to quaternary structure, the 4 large subunits of the cytochrome b6-f complex are cytochrome b6, subunit IV (17 kDa polypeptide, petD), cytochrome f and the Rieske protein, while the 4 small subunits are PetG, PetL, PetM and PetN. The complex functions as a dimer. Requires heme as cofactor.

Its subcellular location is the plastid. The protein localises to the chloroplast thylakoid membrane. Component of the cytochrome b6-f complex, which mediates electron transfer between photosystem II (PSII) and photosystem I (PSI), cyclic electron flow around PSI, and state transitions. In Triticum aestivum (Wheat), this protein is Cytochrome f (petA).